The following is a 196-amino-acid chain: Imidazoleglycerol-phosphate dehydratase (196 aa).

Belongs to the imidazoleglycerol-phosphate dehydratase family.

The protein resides in the cytoplasm. The catalysed reaction is D-erythro-1-(imidazol-4-yl)glycerol 3-phosphate = 3-(imidazol-4-yl)-2-oxopropyl phosphate + H2O. The protein operates within amino-acid biosynthesis; L-histidine biosynthesis; L-histidine from 5-phospho-alpha-D-ribose 1-diphosphate: step 6/9. This Caulobacter vibrioides (strain ATCC 19089 / CIP 103742 / CB 15) (Caulobacter crescentus) protein is Imidazoleglycerol-phosphate dehydratase.